The sequence spans 81 residues: ATP synthase subunit c, chloroplastic (81 aa).

2 consecutive transmembrane segments (helical) span residues 3-23 (PLIS…ASIG) and 57-77 (LAFM…LLFA).

This sequence belongs to the ATPase C chain family. As to quaternary structure, F-type ATPases have 2 components, F(1) - the catalytic core - and F(0) - the membrane proton channel. F(1) has five subunits: alpha(3), beta(3), gamma(1), delta(1), epsilon(1). F(0) has four main subunits: a(1), b(1), b'(1) and c(10-14). The alpha and beta chains form an alternating ring which encloses part of the gamma chain. F(1) is attached to F(0) by a central stalk formed by the gamma and epsilon chains, while a peripheral stalk is formed by the delta, b and b' chains.

Its subcellular location is the plastid. The protein resides in the chloroplast thylakoid membrane. Functionally, f(1)F(0) ATP synthase produces ATP from ADP in the presence of a proton or sodium gradient. F-type ATPases consist of two structural domains, F(1) containing the extramembraneous catalytic core and F(0) containing the membrane proton channel, linked together by a central stalk and a peripheral stalk. During catalysis, ATP synthesis in the catalytic domain of F(1) is coupled via a rotary mechanism of the central stalk subunits to proton translocation. In terms of biological role, key component of the F(0) channel; it plays a direct role in translocation across the membrane. A homomeric c-ring of between 10-14 subunits forms the central stalk rotor element with the F(1) delta and epsilon subunits. This is ATP synthase subunit c, chloroplastic from Ceratophyllum demersum (Rigid hornwort).